The chain runs to 894 residues: Glutamate receptor 3 (894 aa).

The N-terminal stretch at 1 to 28 (MARQKKMGQNVLRAVFFLVLGLLGHSHG) is a signal peptide. Residues 29-552 (GFPNTISIGG…GVFSFLDPLA (524 aa)) are Extracellular-facing. N-linked (GlcNAc...) asparagine glycosylation is found at N63, N266, N380, N415, and N422. C91 and C340 are oxidised to a cystine. The L-glutamate site is built by P508, T510, and R515. The chain crosses the membrane as a helical span at residues 553–573 (YEIWMCIVFASIGVSVVLFLV). Residues 574 to 602 (SRFSPYEWHLEDNNEEPRDPQSPPDPPNE) are Cytoplasmic-facing. Positions 603–618 (FGIFNSLWFSLGAFMQ) form an intramembrane region, helical; Pore-forming. Residues 619 to 621 (QGC) lie within the membrane without spanning it. Residue C621 is the site of S-palmitoyl cysteine attachment. Topologically, residues 622-627 (DISPRS) are cytoplasmic. A helical transmembrane segment spans residues 628–648 (LSGRIVGGVWWFFTLIIISSY). The Extracellular portion of the chain corresponds to 649–823 (TANLAAFLTV…DKTSALSLSN (175 aa)). L-glutamate is bound by residues S686, T687, and E737. The cysteines at positions 750 and 805 are disulfide-linked. A helical transmembrane segment spans residues 824–844 (VAGVFYILVGGLGLAMMVALI). Residues 845–894 (EFCYKSRAESKRMKLTKNTQNFKPAPATNTQNYATYREGYNVYGTESVKI) lie on the Cytoplasmic side of the membrane. A lipid anchor (S-palmitoyl cysteine) is attached at C847. A phosphotyrosine mark is found at Y877 and Y887.

Belongs to the glutamate-gated ion channel (TC 1.A.10.1) family. GRIA3 subfamily. As to quaternary structure, homotetramer or heterotetramer of pore-forming glutamate receptor subunits. Tetramers may be formed by the dimerization of dimers. Interacts with PICK1, GRIP1 and GRIP2. Found in a complex with GRIA1, GRIA2, GRIA4, CNIH2, CNIH3, CACNG2, CACNG3, CACNG4, CACNG5, CACNG7 and CACNG8. Interacts with CACNG5. Found in a complex with GRIA1, GRIA2, GRIA4, DLG4, CACNG8 and CNIH2.

The protein localises to the cell membrane. The protein resides in the postsynaptic cell membrane. Its subcellular location is the postsynaptic density membrane. The enzyme catalyses Ca(2+)(in) = Ca(2+)(out). Its function is as follows. Ionotropic glutamate receptor that functions as a ligand-gated cation channel, gated by L-glutamate and glutamatergic agonists such as alpha-amino-3-hydroxy-5-methyl-4-isoxazolepropionic acid (AMPA), quisqualic acid, and kainic acid. L-glutamate acts as an excitatory neurotransmitter at many synapses in the central nervous system and plays an important role in fast excitatory synaptic transmission by inducing long-term potentiation. Binding of the excitatory neurotransmitter L-glutamate induces a conformation change, leading to the opening of the cation channel, and thereby converts the chemical signal to an electrical impulse upon entry of calcium. The receptor then desensitizes rapidly and enters a transient inactive state, characterized by the presence of bound agonist. In the presence of CACNG8, shows resensitization which is characterized by a delayed accumulation of current flux upon continued application of glutamate. This is Glutamate receptor 3 from Macaca fascicularis (Crab-eating macaque).